Here is a 362-residue protein sequence, read N- to C-terminus: 3-dehydroquinate synthase (362 aa).

NAD(+)-binding positions include 71–76, 105–109, 129–130, lysine 142, lysine 151, and 169–172; these read DGEQYK, GVIGD, TT, and CLKT. Residues glutamate 184, histidine 247, and histidine 264 each coordinate Zn(2+).

Belongs to the sugar phosphate cyclases superfamily. Dehydroquinate synthase family. It depends on Co(2+) as a cofactor. Requires Zn(2+) as cofactor. The cofactor is NAD(+).

Its subcellular location is the cytoplasm. The catalysed reaction is 7-phospho-2-dehydro-3-deoxy-D-arabino-heptonate = 3-dehydroquinate + phosphate. Its pathway is metabolic intermediate biosynthesis; chorismate biosynthesis; chorismate from D-erythrose 4-phosphate and phosphoenolpyruvate: step 2/7. In terms of biological role, catalyzes the conversion of 3-deoxy-D-arabino-heptulosonate 7-phosphate (DAHP) to dehydroquinate (DHQ). The protein is 3-dehydroquinate synthase of Salmonella agona (strain SL483).